Here is a 570-residue protein sequence, read N- to C-terminus: Sulfite reductase [NADPH] hemoprotein beta-component (570 aa).

Residues C433, C439, C478, and C482 each contribute to the [4Fe-4S] cluster site. Residue C482 participates in siroheme binding.

Belongs to the nitrite and sulfite reductase 4Fe-4S domain family. In terms of assembly, alpha(8)-beta(8). The alpha component is a flavoprotein, the beta component is a hemoprotein. It depends on siroheme as a cofactor. [4Fe-4S] cluster serves as cofactor.

It catalyses the reaction hydrogen sulfide + 3 NADP(+) + 3 H2O = sulfite + 3 NADPH + 4 H(+). It functions in the pathway sulfur metabolism; hydrogen sulfide biosynthesis; hydrogen sulfide from sulfite (NADPH route): step 1/1. In terms of biological role, component of the sulfite reductase complex that catalyzes the 6-electron reduction of sulfite to sulfide. This is one of several activities required for the biosynthesis of L-cysteine from sulfate. The sequence is that of Sulfite reductase [NADPH] hemoprotein beta-component from Aeromonas hydrophila subsp. hydrophila (strain ATCC 7966 / DSM 30187 / BCRC 13018 / CCUG 14551 / JCM 1027 / KCTC 2358 / NCIMB 9240 / NCTC 8049).